The following is a 66-amino-acid chain: Large ribosomal subunit protein bL35 (66 aa).

Over residues 1–26 (MPKMKTHRGSAKRFKKTGSGKLKRSH) the composition is skewed to basic residues. The interval 1–48 (MPKMKTHRGSAKRFKKTGSGKLKRSHAYTSHLFANKSQKQKRKLRKSA) is disordered.

It belongs to the bacterial ribosomal protein bL35 family.

This Bacillus licheniformis (strain ATCC 14580 / DSM 13 / JCM 2505 / CCUG 7422 / NBRC 12200 / NCIMB 9375 / NCTC 10341 / NRRL NRS-1264 / Gibson 46) protein is Large ribosomal subunit protein bL35.